A 391-amino-acid polypeptide reads, in one-letter code: Protein kinase ORF14 (391 aa).

The Protein kinase domain occupies 109–391 (VPLRHTRGNI…ETLVDEFSKI (283 aa)). Lys-134 serves as a coordination point for ATP. Catalysis depends on Asp-235, which acts as the Proton acceptor.

It belongs to the protein kinase superfamily. Ser/Thr protein kinase family.

The catalysed reaction is L-seryl-[protein] + ATP = O-phospho-L-seryl-[protein] + ADP + H(+). It carries out the reaction L-threonyl-[protein] + ATP = O-phospho-L-threonyl-[protein] + ADP + H(+). The chain is Protein kinase ORF14 (ORF14) from Ictalurid herpesvirus 1 (strain Auburn) (IcHV-1).